The sequence spans 145 residues: D-aminoacyl-tRNA deacylase (145 aa).

Positions 137-138 match the Gly-cisPro motif, important for rejection of L-amino acids motif; it reads GP.

It belongs to the DTD family. Homodimer.

It localises to the cytoplasm. It catalyses the reaction glycyl-tRNA(Ala) + H2O = tRNA(Ala) + glycine + H(+). The enzyme catalyses a D-aminoacyl-tRNA + H2O = a tRNA + a D-alpha-amino acid + H(+). Functionally, an aminoacyl-tRNA editing enzyme that deacylates mischarged D-aminoacyl-tRNAs. Also deacylates mischarged glycyl-tRNA(Ala), protecting cells against glycine mischarging by AlaRS. Acts via tRNA-based rather than protein-based catalysis; rejects L-amino acids rather than detecting D-amino acids in the active site. By recycling D-aminoacyl-tRNA to D-amino acids and free tRNA molecules, this enzyme counteracts the toxicity associated with the formation of D-aminoacyl-tRNA entities in vivo and helps enforce protein L-homochirality. The sequence is that of D-aminoacyl-tRNA deacylase from Salmonella typhimurium (strain LT2 / SGSC1412 / ATCC 700720).